The primary structure comprises 211 residues: Large ribosomal subunit protein uL4 (211 aa).

The disordered stretch occupies residues 44-94 (RSGNHATKTRSEVRGGGKKPWSQKGTGHARQGSTRAPHWVGGGTVHGPQKR).

The protein belongs to the universal ribosomal protein uL4 family. As to quaternary structure, part of the 50S ribosomal subunit.

Its function is as follows. One of the primary rRNA binding proteins, this protein initially binds near the 5'-end of the 23S rRNA. It is important during the early stages of 50S assembly. It makes multiple contacts with different domains of the 23S rRNA in the assembled 50S subunit and ribosome. In terms of biological role, forms part of the polypeptide exit tunnel. The sequence is that of Large ribosomal subunit protein uL4 from Leptospira borgpetersenii serovar Hardjo-bovis (strain JB197).